A 375-amino-acid polypeptide reads, in one-letter code: POU domain, class 3, transcription factor 1-A (375 aa).

3 disordered regions span residues 1–29 (MAAT…RMHQ), 67–138 (PASD…HQPL), and 151–200 (MLGP…PSSD). Composition is skewed to polar residues over residues 107–117 (VHQQSPSSHAW), 129–138 (SPSSNSHQPL), and 151–160 (MLGPQASSLH). Basic and acidic residues predominate over residues 162 to 177 (SMRDPLHDDPGVHDTQ). Residues 194 to 268 (EDAPSSDDLE…LLNKWLEETD (75 aa)) enclose the POU-specific domain. The segment at residues 286-345 (KRKKRTSIEVGVKGALENHFLKCPKPSAHEITSLADSLQLEKEVVRVWFCNRRQKEKRMT) is a DNA-binding region (homeobox).

It belongs to the POU transcription factor family. Class-3 subfamily. As to expression, in embryos at the neural fold stage, localized primarily in the anterior neural plate, and localized mostly in the anterior region of the nerve cord of neurula stage embryos. In tailbud stages, expressed predominantly in the eye and brain, with weak expression along the length of the nerve cord. In adults, expressed in skin and brain.

The protein resides in the nucleus. Functionally, acts as a transcription factor. May play a role in neuronal differentiation. In Xenopus laevis (African clawed frog), this protein is POU domain, class 3, transcription factor 1-A (pou3f1-a).